Here is a 234-residue protein sequence, read N- to C-terminus: MKMTAIAKASLALGILATGTITSLHQTVNASEHKAKYENVTKDIFDLRDYYSGASKELKNVTGYRYSKGGKHYLIFDKNRKFTRVQIFGKDIERFKARKNPGLDIFVVKEAENRNGTVFSYGGVTKKNQDAYYDYINAPRFQIKRDEGDGIATYGRVHYIYKEEISLKELDFKLRQYLIQNFDLYKKFPKDSKIKVIMKDGGYYTFELNKKLQTNRMSDVIDGRNIEKIEANIR.

An N-terminal signal peptide occupies residues 1–30; that stretch reads MKMTAIAKASLALGILATGTITSLHQTVNA.

This sequence belongs to the staphylococcal/streptococcal toxin family. Interacts with host SELPLG; this interaction prevents SELPLG-mediated neutrophil rolling. Interacts with host MMP9 (via sialic acid-containing O-glycans); this interaction inhibits MMP9 activity. Interacts with host GP1BA and GP6; these interactions play an important role in platelet binding and activation.

Functionally, secreted protein that plays a role in the inhibition of host innate immune system. Modulates the interaction between host SELPLG and P-selectin thereby preventing initial rolling of neutrophils toward the site of infection. Interferes with leukocyte trafficking by inhibiting host metalloproteinase-9/MMP9 activity. Also associates with two different platelet surface receptors GP1A and GP6 leading to platelet activation and aggregation. This chain is Staphylococcal superantigen-like 5, found in Staphylococcus aureus (strain NCTC 8325 / PS 47).